The chain runs to 312 residues: Tetraacyldisaccharide 4'-kinase (312 aa).

Position 60 to 67 (60 to 67 (IAGGSGKT)) interacts with ATP.

The protein belongs to the LpxK family.

The enzyme catalyses a lipid A disaccharide + ATP = a lipid IVA + ADP + H(+). The protein operates within glycolipid biosynthesis; lipid IV(A) biosynthesis; lipid IV(A) from (3R)-3-hydroxytetradecanoyl-[acyl-carrier-protein] and UDP-N-acetyl-alpha-D-glucosamine: step 6/6. In terms of biological role, transfers the gamma-phosphate of ATP to the 4'-position of a tetraacyldisaccharide 1-phosphate intermediate (termed DS-1-P) to form tetraacyldisaccharide 1,4'-bis-phosphate (lipid IVA). The sequence is that of Tetraacyldisaccharide 4'-kinase from Helicobacter pylori (strain HPAG1).